A 663-amino-acid chain; its full sequence is DNA topoisomerase 4 subunit B (663 aa).

Residues Y7, N47, D74, 114-120 (GLHGVGA), and K341 contribute to the ATP site. A disordered region spans residues 386–416 (REAARKAREDARSGKKNKRKDTLLSGKLTPA). Basic and acidic residues predominate over residues 387–398 (EAARKAREDARS). One can recognise a Toprim domain in the interval 424–538 (NELYLVEGDS…AGRVFIALPP (115 aa)). 3 residues coordinate Mg(2+): E430, D503, and D505.

The protein belongs to the type II topoisomerase family. ParE type 2 subfamily. In terms of assembly, heterotetramer composed of ParC and ParE. Mg(2+) serves as cofactor. Mn(2+) is required as a cofactor. Requires Ca(2+) as cofactor.

It carries out the reaction ATP-dependent breakage, passage and rejoining of double-stranded DNA.. Topoisomerase IV is essential for chromosome segregation. It relaxes supercoiled DNA. Performs the decatenation events required during the replication of a circular DNA molecule. The polypeptide is DNA topoisomerase 4 subunit B (Staphylococcus aureus (strain Mu50 / ATCC 700699)).